The primary structure comprises 298 residues: Protease HtpX homolog (298 aa).

Transmembrane regions (helical) follow at residues 16–36 (VMFGFGVLTLAIGAALGYLFW) and 38–58 (SWVSGTVIAAVVAVVYMLIMI). Position 144 (histidine 144) interacts with Zn(2+). Glutamate 145 is an active-site residue. Residue histidine 148 participates in Zn(2+) binding. 2 helical membrane-spanning segments follow: residues 159–179 (IALALSAAIGLLVNFASNWFW) and 197–217 (IIGLVISIFLIILAPLAASIA). Glutamate 226 contributes to the Zn(2+) binding site.

Belongs to the peptidase M48B family. Zn(2+) is required as a cofactor.

The protein resides in the cell membrane. The polypeptide is Protease HtpX homolog (Levilactobacillus brevis (strain ATCC 367 / BCRC 12310 / CIP 105137 / JCM 1170 / LMG 11437 / NCIMB 947 / NCTC 947) (Lactobacillus brevis)).